We begin with the raw amino-acid sequence, 216 residues long: Pyrrolidone-carboxylate peptidase (216 aa).

Catalysis depends on residues E80, C143, and H168.

The protein belongs to the peptidase C15 family. In terms of assembly, homotetramer.

It localises to the cytoplasm. The enzyme catalyses Release of an N-terminal pyroglutamyl group from a polypeptide, the second amino acid generally not being Pro.. In terms of biological role, removes 5-oxoproline from various penultimate amino acid residues except L-proline. This chain is Pyrrolidone-carboxylate peptidase, found in Cupriavidus necator (strain ATCC 17699 / DSM 428 / KCTC 22496 / NCIMB 10442 / H16 / Stanier 337) (Ralstonia eutropha).